Here is a 324-residue protein sequence, read N- to C-terminus: tRNA dimethylallyltransferase (324 aa).

17–24 (GPTASGKT) is an ATP binding site. A substrate-binding site is contributed by 19–24 (TASGKT). Interaction with substrate tRNA regions lie at residues 42–45 (DSAL), 166–170 (QRIQR), 251–256 (RCVGYR), and 284–291 (KRQITWLR).

Belongs to the IPP transferase family. Monomer. It depends on Mg(2+) as a cofactor.

The enzyme catalyses adenosine(37) in tRNA + dimethylallyl diphosphate = N(6)-dimethylallyladenosine(37) in tRNA + diphosphate. Catalyzes the transfer of a dimethylallyl group onto the adenine at position 37 in tRNAs that read codons beginning with uridine, leading to the formation of N6-(dimethylallyl)adenosine (i(6)A). This Burkholderia ambifaria (strain MC40-6) protein is tRNA dimethylallyltransferase.